The primary structure comprises 1455 residues: Nik-related protein kinase (1455 aa).

Positions 25-313 (FSLDKAIGLG…SGNMLLHPFV (289 aa)) constitute a Protein kinase domain. ATP-binding positions include 31–39 (IGLGTYGRI) and K54. Residue D177 is the Proton acceptor of the active site. 2 disordered regions span residues 385–404 (LHGE…PQDQ) and 471–568 (TQDN…EDKE). A compositionally biased stretch (polar residues) spans 471–480 (TQDNKATSPE). The span at 494-505 (EALETEQPKDLD) shows a compositional bias: basic and acidic residues. Positions 520–531 (QPRQGQAAEQQQ) are enriched in low complexity. The segment covering 540–568 (PPEEDREPEQAEVQEEAVEPPQAEIEDKE) has biased composition (acidic residues). A coiled-coil region spans residues 716 to 750 (RRRHRRWEDIFNQHEEQLRRVENDREDDSSDNDEV). 2 disordered regions span residues 760–854 (IEPH…PPYS) and 1029–1080 (AFGN…TETS). S847 and S850 each carry phosphoserine. The span at 1029-1038 (AFGNHGANRG) shows a compositional bias: low complexity. The segment covering 1044–1078 (RNREANGRNEENGAFGRDQHVFPEFEHEESDRGTE) has biased composition (basic and acidic residues). The CNH domain maps to 1138–1425 (SSEVYCGSLW…RFLCARGDKM (288 aa)).

This sequence belongs to the protein kinase superfamily. STE Ser/Thr protein kinase family. STE20 subfamily.

The catalysed reaction is L-seryl-[protein] + ATP = O-phospho-L-seryl-[protein] + ADP + H(+). It carries out the reaction L-threonyl-[protein] + ATP = O-phospho-L-threonyl-[protein] + ADP + H(+). May phosphorylate cofilin-1 and induce actin polymerization through this process, during the late stages of embryogenesis. Involved in the TNF-alpha-induced signaling pathway. The chain is Nik-related protein kinase (Nrk) from Mus musculus (Mouse).